A 294-amino-acid chain; its full sequence is MALSLDGLPEKPAPAEAPSPPVGRRVQASLVFARGGRTTVLSRQVVPYPFHITRAFRMHPESPDLATLYLQSASGGLYAADHLTLAIAARAGARAHVTTQAGTVVHRGGPEPSRQETRLTIAADAFLALNPDPLILFPGAHLAVSTEITAEPGARAIVTESVACHDPVGEGRPFDRLDLGLTIRDPEGRALVRERSRIDGRAFTAPDSPMGPHRAYGTMVVLGAPDDARLAGLHLRQAADAAGCLTGVSPLPNGAGLGLRLLAPDGGTLSAGMDAVFRIVFETLSGCAPGRRRK.

Residues 1-22 (MALSLDGLPEKPAPAEAPSPPV) form a disordered region. Positions 11 to 21 (KPAPAEAPSPP) are enriched in pro residues.

This sequence belongs to the UreD family. UreD, UreF and UreG form a complex that acts as a GTP-hydrolysis-dependent molecular chaperone, activating the urease apoprotein by helping to assemble the nickel containing metallocenter of UreC. The UreE protein probably delivers the nickel.

It localises to the cytoplasm. Its function is as follows. Required for maturation of urease via the functional incorporation of the urease nickel metallocenter. This is Urease accessory protein UreD 1 from Methylorubrum extorquens (strain PA1) (Methylobacterium extorquens).